A 313-amino-acid chain; its full sequence is 4-hydroxy-3-methylbut-2-enyl diphosphate reductase (313 aa).

[4Fe-4S] cluster is bound at residue Cys-13. His-41 and His-75 together coordinate (2E)-4-hydroxy-3-methylbut-2-enyl diphosphate. His-41 and His-75 together coordinate dimethylallyl diphosphate. Residues His-41 and His-75 each contribute to the isopentenyl diphosphate site. A [4Fe-4S] cluster-binding site is contributed by Cys-97. His-125 contributes to the (2E)-4-hydroxy-3-methylbut-2-enyl diphosphate binding site. Residue His-125 coordinates dimethylallyl diphosphate. His-125 contacts isopentenyl diphosphate. The active-site Proton donor is Glu-127. Thr-168 serves as a coordination point for (2E)-4-hydroxy-3-methylbut-2-enyl diphosphate. [4Fe-4S] cluster is bound at residue Cys-218. Ser-246, Ser-247, Asn-248, and Ser-295 together coordinate (2E)-4-hydroxy-3-methylbut-2-enyl diphosphate. The dimethylallyl diphosphate site is built by Ser-246, Ser-247, Asn-248, and Ser-295. Isopentenyl diphosphate is bound by residues Ser-246, Ser-247, Asn-248, and Ser-295.

The protein belongs to the IspH family. It depends on [4Fe-4S] cluster as a cofactor.

The catalysed reaction is isopentenyl diphosphate + 2 oxidized [2Fe-2S]-[ferredoxin] + H2O = (2E)-4-hydroxy-3-methylbut-2-enyl diphosphate + 2 reduced [2Fe-2S]-[ferredoxin] + 2 H(+). It catalyses the reaction dimethylallyl diphosphate + 2 oxidized [2Fe-2S]-[ferredoxin] + H2O = (2E)-4-hydroxy-3-methylbut-2-enyl diphosphate + 2 reduced [2Fe-2S]-[ferredoxin] + 2 H(+). It functions in the pathway isoprenoid biosynthesis; dimethylallyl diphosphate biosynthesis; dimethylallyl diphosphate from (2E)-4-hydroxy-3-methylbutenyl diphosphate: step 1/1. It participates in isoprenoid biosynthesis; isopentenyl diphosphate biosynthesis via DXP pathway; isopentenyl diphosphate from 1-deoxy-D-xylulose 5-phosphate: step 6/6. Functionally, catalyzes the conversion of 1-hydroxy-2-methyl-2-(E)-butenyl 4-diphosphate (HMBPP) into a mixture of isopentenyl diphosphate (IPP) and dimethylallyl diphosphate (DMAPP). Acts in the terminal step of the DOXP/MEP pathway for isoprenoid precursor biosynthesis. The sequence is that of 4-hydroxy-3-methylbut-2-enyl diphosphate reductase from Chlorobium phaeovibrioides (strain DSM 265 / 1930) (Prosthecochloris vibrioformis (strain DSM 265)).